We begin with the raw amino-acid sequence, 335 residues long: Ubiquinone biosynthesis protein COQ4, mitochondrial (335 aa).

A mitochondrion-targeting transit peptide spans 1-10 (MLRLSLLRST). The Zn(2+) site is built by H210, D211, H214, and E226.

The protein belongs to the COQ4 family. In terms of assembly, component of a multi-subunit COQ enzyme complex, composed of at least COQ3, COQ4, COQ5, COQ6, COQ7 and COQ9. Interacts with COQ3. It depends on Zn(2+) as a cofactor.

It is found in the mitochondrion inner membrane. It carries out the reaction 4-hydroxy-3-methoxy-5-(all-trans-hexaprenyl)benzoate + H(+) = 2-methoxy-6-(all-trans-hexaprenyl)phenol + CO2. It functions in the pathway cofactor biosynthesis; ubiquinone biosynthesis. Functionally, lyase that catalyzes the C1-decarboxylation of 4-hydroxy-3-methoxy-5-(all-trans-hexaprenyl)benzoic acid into 2-methoxy-6-(all-trans-hexaprenyl)phenol during ubiquinone biosynthesis. In Saccharomyces cerevisiae (strain AWRI1631) (Baker's yeast), this protein is Ubiquinone biosynthesis protein COQ4, mitochondrial.